The sequence spans 561 residues: Transmembrane protein 209 (561 aa).

2 positions are modified to phosphoserine: serine 9 and serine 11. The chain crosses the membrane as a helical span at residues 28–48 (VVLAWGLLNVSMAGMIYTEMT). N-linked (GlcNAc...) asparagine glycosylation is present at asparagine 57. Residues 60–80 (YWPLWYIELALASLFSLNALF) traverse the membrane as a helical segment. Serine 98 carries the post-translational modification Phosphoserine. Disordered stretches follow at residues 119–157 (DLAATQIPPAPPSPSIQGQSVLSYSPSRSPSTSPKFTTS) and 195–234 (FSPSPPSPYPTTVGPVESSGLRSRYRSSPTVYNSPTDKED). The segment covering 133 to 157 (SIQGQSVLSYSPSRSPSTSPKFTTS) has biased composition (low complexity). Residues serine 201, serine 222, and serine 248 each carry the phosphoserine modification. Residues 220–229 (RSSPTVYNSP) are compositionally biased toward polar residues. The interval 250 to 271 (EEKQHRVKLGSPDSTSPSSSPT) is disordered. A compositionally biased stretch (low complexity) spans 260 to 271 (SPDSTSPSSSPT). N-linked (GlcNAc...) asparagine glycosylation is present at asparagine 274. Serine 278 is subject to Phosphoserine.

In terms of assembly, interacts with NUP205. Expressed in the testis.

It is found in the membrane. The protein localises to the nucleus envelope. Its subcellular location is the golgi apparatus. The protein resides in the cytoplasm. Functionally, nuclear envelope protein which in association with NUP205, may be involved in nuclear transport of various nuclear proteins in addition to MYC. This Homo sapiens (Human) protein is Transmembrane protein 209 (TMEM209).